Consider the following 417-residue polypeptide: UDP-N-acetylglucosamine 1-carboxyvinyltransferase (417 aa).

22-23 is a binding site for phosphoenolpyruvate; the sequence is KN. R93 lines the UDP-N-acetyl-alpha-D-glucosamine pocket. C117 acts as the Proton donor in catalysis. C117 carries the 2-(S-cysteinyl)pyruvic acid O-phosphothioketal modification. Residues 122-126, D305, and I327 each bind UDP-N-acetyl-alpha-D-glucosamine; that span reads RPVDQ.

Belongs to the EPSP synthase family. MurA subfamily.

It localises to the cytoplasm. The enzyme catalyses phosphoenolpyruvate + UDP-N-acetyl-alpha-D-glucosamine = UDP-N-acetyl-3-O-(1-carboxyvinyl)-alpha-D-glucosamine + phosphate. The protein operates within cell wall biogenesis; peptidoglycan biosynthesis. In terms of biological role, cell wall formation. Adds enolpyruvyl to UDP-N-acetylglucosamine. This chain is UDP-N-acetylglucosamine 1-carboxyvinyltransferase, found in Dechloromonas aromatica (strain RCB).